We begin with the raw amino-acid sequence, 227 residues long: Thymidine kinase (227 aa).

ATP is bound by residues 15–22 (GSMFSGKT) and 87–90 (DEAQ). The active-site Proton acceptor is glutamate 88. 4 residues coordinate Zn(2+): cysteine 144, cysteine 147, cysteine 176, and cysteine 179. A disordered region spans residues 198–227 (RAVATDDADASTNEADPEAADAASADGTAA). Residues 217–227 (ADAASADGTAA) show a composition bias toward low complexity.

Belongs to the thymidine kinase family. Homotetramer.

The protein localises to the cytoplasm. It carries out the reaction thymidine + ATP = dTMP + ADP + H(+). This Salinibacter ruber (strain DSM 13855 / M31) protein is Thymidine kinase.